The following is a 417-amino-acid chain: Alpha-ionylideneethane synthase aba3 (417 aa).

It belongs to the alpha-ionylideneethane synthase family.

Its pathway is hormone biosynthesis. Functionally, alpha-ionylideneethane synthase; part of the gene cluster that mediates the biosynthesis of abscisic acid (ABA), a phytohormone that acts antagonistically toward salicylic acid (SA), jasmonic acid (JA) and ethylene (ETH) signaling, to impede plant defense responses. The first step of the pathway catalyzes the reaction from farnesyl diphosphate to alpha-ionylideneethane performed by the alpha-ionylideneethane synthase aba3 via a three-step reaction mechanism involving 2 neutral intermediates, beta-farnesene and allofarnesene. The cytochrome P450 monooxygenase aba1 might then be involved in the conversion of alpha-ionylideneethane to alpha-ionylideneacetic acid. Alpha-ionylideneacetic acid is further converted to abscisic acid in 2 steps involving the cytochrome P450 monooxygenase aba2 and the short-chain dehydrogenase/reductase aba4, via the intermediates 1'-deoxy-ABA or 1',4'-trans-diol-ABA, depending on the order of action of these 2 enzymes. Aba2 is responsible for the hydroxylation of carbon atom C-1' and aba4 might be involved in the oxidation of the C-4' carbon atom. The chain is Alpha-ionylideneethane synthase aba3 from Botryotinia fuckeliana (Noble rot fungus).